We begin with the raw amino-acid sequence, 78 residues long: UPF0270 protein IL0325 (78 aa).

It belongs to the UPF0270 family.

This Idiomarina loihiensis (strain ATCC BAA-735 / DSM 15497 / L2-TR) protein is UPF0270 protein IL0325.